A 217-amino-acid chain; its full sequence is MRLNIAIDGPAGAGKSTIAKLVAKKFRLMYINTGAMYRAVTLMAMRQNIRANDVKKLCDLIESLSMHFENDKLIVNGEDVSEEILLPKTSQNVSDYASVLEVREKLVYLQKKMAGRYDVVMDGRDIGTVVLNDAPFKFYLTATPEERAKRRYKELSAKNIKVCYDDILNDIIRRDYIDSNREVNPLTKAYDAVEIDSSNMCIEEVVDYIVQYISKKI.

9 to 17 contacts ATP; the sequence is GPAGAGKST.

The protein belongs to the cytidylate kinase family. Type 1 subfamily.

It is found in the cytoplasm. The catalysed reaction is CMP + ATP = CDP + ADP. The enzyme catalyses dCMP + ATP = dCDP + ADP. This chain is Cytidylate kinase, found in Clostridium acetobutylicum (strain ATCC 824 / DSM 792 / JCM 1419 / IAM 19013 / LMG 5710 / NBRC 13948 / NRRL B-527 / VKM B-1787 / 2291 / W).